The chain runs to 485 residues: Zinc finger SWIM domain-containing protein 1 (485 aa).

An SWIM-type zinc finger spans residues 363 to 405; the sequence is MNIQILEDTHKVQPQPPASCSCYFNQAFHLPCRHILAMLSARR.

This Homo sapiens (Human) protein is Zinc finger SWIM domain-containing protein 1 (ZSWIM1).